The following is a 425-amino-acid chain: Histidine--tRNA ligase (425 aa).

It belongs to the class-II aminoacyl-tRNA synthetase family. In terms of assembly, homodimer.

It localises to the cytoplasm. It catalyses the reaction tRNA(His) + L-histidine + ATP = L-histidyl-tRNA(His) + AMP + diphosphate + H(+). The chain is Histidine--tRNA ligase from Pelotomaculum thermopropionicum (strain DSM 13744 / JCM 10971 / SI).